Here is a 517-residue protein sequence, read N- to C-terminus: DNA primase DnaG (517 aa).

The region spanning 171-257 (DAIIILEGRA…CVEDLVQKEV (87 aa)) is the Toprim domain. Positions 177, 219, and 221 each coordinate Mg(2+).

The protein belongs to the archaeal DnaG primase family. Forms a ternary complex with MCM helicase and DNA. Component of the archaeal exosome complex. The cofactor is Mg(2+).

It catalyses the reaction ssDNA + n NTP = ssDNA/pppN(pN)n-1 hybrid + (n-1) diphosphate.. In terms of biological role, RNA polymerase that catalyzes the synthesis of short RNA molecules used as primers for DNA polymerase during DNA replication. Also part of the exosome, which is a complex involved in RNA degradation. Acts as a poly(A)-binding protein that enhances the interaction between heteromeric, adenine-rich transcripts and the exosome. This is DNA primase DnaG from Methanosarcina barkeri (strain Fusaro / DSM 804).